The following is a 217-amino-acid chain: MAGRTTFLREYKLVVVGGGGVGKSALTIQFIQSHFVDEYDPTIEDSYRKQCVIDDEVALLDVLDTAGQEEYGAMREQYMRTGEGFLLVYSITSRNSFEEISTFHQQILRVKDQDTFPVVVVANKCDLEYERQVGMNEGRDLARHFGCKFVETSAKVRINVDQAFQDLVREIRKYNKEQQTTGRMMTGGGGGGPPGTYAGKDPNDEGAGGCCGGCVVL.

Position 17–24 (17–24) interacts with GTP; sequence GGGGVGKS. The Effector region signature appears at 39-47; the sequence is YDPTIEDSY. GTP-binding positions include 64-68 and 123-126; these read DTAGQ and NKCD. The segment at 181–200 is disordered; sequence TGRMMTGGGGGGPPGTYAGK. Positions 185 to 194 are enriched in gly residues; sequence MTGGGGGGPP. 2 S-palmitoyl cysteine lipidation sites follow: C210 and C211. Cysteine methyl ester is present on C214. C214 carries the S-geranylgeranyl cysteine lipid modification. A propeptide spans 215-217 (removed in mature form); the sequence is VVL.

It belongs to the small GTPase superfamily. Ras family.

The protein localises to the cell membrane. The enzyme catalyses GTP + H2O = GDP + phosphate + H(+). With respect to regulation, alternates between an inactive form bound to GDP and an active form bound to GTP. Activated by a guanine nucleotide-exchange factor (GEF) and inactivated by a GTPase-activating protein (GAP). The chain is Ras-like protein from Lentinula edodes (Shiitake mushroom).